The chain runs to 414 residues: DNA primase small subunit PriS (414 aa).

Residues Asp98, Asp100, and Asp312 contribute to the active site.

The protein belongs to the eukaryotic-type primase small subunit family. Heterodimer of a small subunit (PriS) and a large subunit (PriL). It depends on Mg(2+) as a cofactor. Mn(2+) serves as cofactor.

Its function is as follows. Catalytic subunit of DNA primase, an RNA polymerase that catalyzes the synthesis of short RNA molecules used as primers for DNA polymerase during DNA replication. The small subunit contains the primase catalytic core and has DNA synthesis activity on its own. Binding to the large subunit stabilizes and modulates the activity, increasing the rate of DNA synthesis while decreasing the length of the DNA fragments, and conferring RNA synthesis capability. The DNA polymerase activity may enable DNA primase to also catalyze primer extension after primer synthesis. May also play a role in DNA repair. This chain is DNA primase small subunit PriS, found in Methanosarcina barkeri (strain Fusaro / DSM 804).